Here is a 161-residue protein sequence, read N- to C-terminus: Crossover junction endodeoxyribonuclease RuvC (161 aa).

Residues D9, E72, and D144 contribute to the active site. 3 residues coordinate Mg(2+): D9, E72, and D144.

The protein belongs to the RuvC family. As to quaternary structure, homodimer which binds Holliday junction (HJ) DNA. The HJ becomes 2-fold symmetrical on binding to RuvC with unstacked arms; it has a different conformation from HJ DNA in complex with RuvA. In the full resolvosome a probable DNA-RuvA(4)-RuvB(12)-RuvC(2) complex forms which resolves the HJ. It depends on Mg(2+) as a cofactor.

It localises to the cytoplasm. The catalysed reaction is Endonucleolytic cleavage at a junction such as a reciprocal single-stranded crossover between two homologous DNA duplexes (Holliday junction).. In terms of biological role, the RuvA-RuvB-RuvC complex processes Holliday junction (HJ) DNA during genetic recombination and DNA repair. Endonuclease that resolves HJ intermediates. Cleaves cruciform DNA by making single-stranded nicks across the HJ at symmetrical positions within the homologous arms, yielding a 5'-phosphate and a 3'-hydroxyl group; requires a central core of homology in the junction. The consensus cleavage sequence is 5'-(A/T)TT(C/G)-3'. Cleavage occurs on the 3'-side of the TT dinucleotide at the point of strand exchange. HJ branch migration catalyzed by RuvA-RuvB allows RuvC to scan DNA until it finds its consensus sequence, where it cleaves and resolves the cruciform DNA. This Synechococcus sp. (strain ATCC 27144 / PCC 6301 / SAUG 1402/1) (Anacystis nidulans) protein is Crossover junction endodeoxyribonuclease RuvC.